The chain runs to 202 residues: MADS-box transcription factor 33 (202 aa).

The MADS-box domain occupies 1 to 61 (MVRGKVQMRR…GKLHELATNG (61 aa)). The K-box domain maps to 87 to 177 (QQVAEQGIFL…QEKVKEQQKL (91 aa)).

Expressed in seedling roots.

It is found in the nucleus. Probable transcription factor. The chain is MADS-box transcription factor 33 (MADS33) from Oryza sativa subsp. japonica (Rice).